An 884-amino-acid chain; its full sequence is Alanine--tRNA ligase (884 aa).

Residues His572, His576, Cys673, and His677 each coordinate Zn(2+).

The protein belongs to the class-II aminoacyl-tRNA synthetase family. Zn(2+) serves as cofactor.

It localises to the cytoplasm. It catalyses the reaction tRNA(Ala) + L-alanine + ATP = L-alanyl-tRNA(Ala) + AMP + diphosphate. Functionally, catalyzes the attachment of alanine to tRNA(Ala) in a two-step reaction: alanine is first activated by ATP to form Ala-AMP and then transferred to the acceptor end of tRNA(Ala). Also edits incorrectly charged Ser-tRNA(Ala) and Gly-tRNA(Ala) via its editing domain. In Xylella fastidiosa (strain 9a5c), this protein is Alanine--tRNA ligase.